A 130-amino-acid polypeptide reads, in one-letter code: Small ribosomal subunit protein uS8z/uS8w (130 aa).

It belongs to the universal ribosomal protein uS8 family.

It localises to the cytoplasm. This chain is Small ribosomal subunit protein uS8z/uS8w (RPS15AA), found in Arabidopsis thaliana (Mouse-ear cress).